Reading from the N-terminus, the 323-residue chain is 4-hydroxy-3-methylbut-2-enyl diphosphate reductase (323 aa).

Cysteine 21 lines the [4Fe-4S] cluster pocket. Residues histidine 50 and histidine 83 each contribute to the (2E)-4-hydroxy-3-methylbut-2-enyl diphosphate site. Residues histidine 50 and histidine 83 each contribute to the dimethylallyl diphosphate site. Residues histidine 50 and histidine 83 each contribute to the isopentenyl diphosphate site. Position 105 (cysteine 105) interacts with [4Fe-4S] cluster. Histidine 133 contributes to the (2E)-4-hydroxy-3-methylbut-2-enyl diphosphate binding site. Residue histidine 133 participates in dimethylallyl diphosphate binding. Histidine 133 contributes to the isopentenyl diphosphate binding site. The Proton donor role is filled by glutamate 135. A (2E)-4-hydroxy-3-methylbut-2-enyl diphosphate-binding site is contributed by threonine 173. Cysteine 203 is a [4Fe-4S] cluster binding site. (2E)-4-hydroxy-3-methylbut-2-enyl diphosphate-binding residues include serine 231, serine 232, asparagine 233, and serine 276. Dimethylallyl diphosphate is bound by residues serine 231, serine 232, asparagine 233, and serine 276. Positions 231, 232, 233, and 276 each coordinate isopentenyl diphosphate.

This sequence belongs to the IspH family. Requires [4Fe-4S] cluster as cofactor.

The enzyme catalyses isopentenyl diphosphate + 2 oxidized [2Fe-2S]-[ferredoxin] + H2O = (2E)-4-hydroxy-3-methylbut-2-enyl diphosphate + 2 reduced [2Fe-2S]-[ferredoxin] + 2 H(+). It catalyses the reaction dimethylallyl diphosphate + 2 oxidized [2Fe-2S]-[ferredoxin] + H2O = (2E)-4-hydroxy-3-methylbut-2-enyl diphosphate + 2 reduced [2Fe-2S]-[ferredoxin] + 2 H(+). Its pathway is isoprenoid biosynthesis; dimethylallyl diphosphate biosynthesis; dimethylallyl diphosphate from (2E)-4-hydroxy-3-methylbutenyl diphosphate: step 1/1. It functions in the pathway isoprenoid biosynthesis; isopentenyl diphosphate biosynthesis via DXP pathway; isopentenyl diphosphate from 1-deoxy-D-xylulose 5-phosphate: step 6/6. Catalyzes the conversion of 1-hydroxy-2-methyl-2-(E)-butenyl 4-diphosphate (HMBPP) into a mixture of isopentenyl diphosphate (IPP) and dimethylallyl diphosphate (DMAPP). Acts in the terminal step of the DOXP/MEP pathway for isoprenoid precursor biosynthesis. This chain is 4-hydroxy-3-methylbut-2-enyl diphosphate reductase, found in Cutibacterium acnes (strain DSM 16379 / KPA171202) (Propionibacterium acnes).